The primary structure comprises 364 residues: Dual-specificity RNA methyltransferase RlmN (364 aa).

Residue Glu-91 is the Proton acceptor of the active site. The Radical SAM core domain maps to 102–337; it reads GTLRITQCLS…AIIRKSKGQD (236 aa). A disulfide bridge links Cys-109 with Cys-342. Residues Cys-116, Cys-120, and Cys-123 each contribute to the [4Fe-4S] cluster site. Residues 169–170, Ser-201, 223–225, and Asn-299 each bind S-adenosyl-L-methionine; these read GE and SLH. The active-site S-methylcysteine intermediate is Cys-342.

Belongs to the radical SAM superfamily. RlmN family. Requires [4Fe-4S] cluster as cofactor.

It is found in the cytoplasm. It carries out the reaction adenosine(2503) in 23S rRNA + 2 reduced [2Fe-2S]-[ferredoxin] + 2 S-adenosyl-L-methionine = 2-methyladenosine(2503) in 23S rRNA + 5'-deoxyadenosine + L-methionine + 2 oxidized [2Fe-2S]-[ferredoxin] + S-adenosyl-L-homocysteine. The enzyme catalyses adenosine(37) in tRNA + 2 reduced [2Fe-2S]-[ferredoxin] + 2 S-adenosyl-L-methionine = 2-methyladenosine(37) in tRNA + 5'-deoxyadenosine + L-methionine + 2 oxidized [2Fe-2S]-[ferredoxin] + S-adenosyl-L-homocysteine. Specifically methylates position 2 of adenine 2503 in 23S rRNA and position 2 of adenine 37 in tRNAs. m2A2503 modification seems to play a crucial role in the proofreading step occurring at the peptidyl transferase center and thus would serve to optimize ribosomal fidelity. The protein is Dual-specificity RNA methyltransferase RlmN of Nitratidesulfovibrio vulgaris (strain DP4) (Desulfovibrio vulgaris).